Here is an 89-residue protein sequence, read N- to C-terminus: Gallinacin-13 (89 aa).

Residues 1–23 (MRILQLLFAIVVILLLQDAPARG) form the signal peptide. Intrachain disulfides connect C30–C58, C37–C51, and C41–C59. A disordered region spans residues 66-89 (PFSNPKHSVLHTAEQDPSPSLGGT).

It belongs to the beta-defensin family. Expressed in the liver, gall bladder, kidney, small intestine, spleen, testis, ovary and male and female reproductive tracts. Not detected in the ovarian stroma and the theca and granulosa layers of the ovarian follicle.

The protein localises to the secreted. The protein resides in the cytoplasmic granule. Its function is as follows. Has bactericidal activity. Potent activity against E.coli, L.monocytogenes, S.typhimurium and S.pyogenes but mot against S.aureus. Has bactericidal activity. The chain is Gallinacin-13 (GAL13) from Gallus gallus (Chicken).